A 188-amino-acid polypeptide reads, in one-letter code: FWLLNVLFPPHTTPKAELSNHTRPVILVPGCLGNPDVVNWMCYRFTIWLDLNMFLPLGVDVPGFGKTYSVEYLDNSKAAPYDWRLEPSQQEEYYLKISLGAPWGGSDLHFEEGWYDLLAGLPAPGVEVYCLYGVGLPTPRXYIFDXGFPYXDPVQQQPVHLLPLPGTQHLNMVFSXQTLEXINAILLG.

The N-linked (GlcNAc...) asparagine glycan is linked to Asn-20. His-169 (charge relay system) is an active-site residue.

Belongs to the AB hydrolase superfamily. Lipase family. Detected in blood plasma (at protein level).

It localises to the secreted. It carries out the reaction a sterol + a 1,2-diacyl-sn-glycero-3-phosphocholine = a sterol ester + a 1-acyl-sn-glycero-3-phosphocholine. The catalysed reaction is a 1-O-alkyl-2-acetyl-sn-glycero-3-phosphocholine + H2O = a 1-O-alkyl-sn-glycero-3-phosphocholine + acetate + H(+). The enzyme catalyses a 1-hexadecanoyl-2-acyl-sn-glycero-3-phosphocholine + (24S)-hydroxycholesterol = (24S)-24-hydroxycholesterol ester + 1-hexadecanoyl-sn-glycero-3-phosphocholine. It catalyses the reaction (24S)-hydroxycholesterol + 1-hexadecanoyl-2-(9Z,12Z-octadecadienoyl)-sn-glycero-3-phosphocholine = (24S)-hydroxycholesterol 3-linoleoate + 1-hexadecanoyl-sn-glycero-3-phosphocholine. It carries out the reaction 1-hexadecanoyl-2-(5Z,8Z,11Z,14Z-eicosatetraenoyl)-sn-glycero-3-phosphocholine + cholesterol = cholesteryl (5Z,8Z,11Z,14Z)-eicosatetraenoate + 1-hexadecanoyl-sn-glycero-3-phosphocholine. The catalysed reaction is 1-hexadecanoyl-2-(9Z-octadecenoyl)-sn-glycero-3-phosphocholine + cholesterol = cholesteryl (9Z-octadecenoate) + 1-hexadecanoyl-sn-glycero-3-phosphocholine. The enzyme catalyses 1-hexadecanoyl-2-(8Z,11Z,14Z-eicosatrienoyl)-sn-glycero-3-phosphocholine + cholesterol = cholesteryl (8Z,11Z,14Z)-eicosatrienoate + 1-hexadecanoyl-sn-glycero-3-phosphocholine. It catalyses the reaction 1-hexadecanoyl-2-(5Z,8Z,11Z-eicosatrienoyl)-sn-glycero-3-phosphocholine + cholesterol = cholesteryl (5Z,8Z,11Z)-eicosatrienoate + 1-hexadecanoyl-sn-glycero-3-phosphocholine. It carries out the reaction 1-hexadecanoyl-2-(5Z,8Z,11Z,14Z,17Z-eicosapentaenoyl)-sn-glycero-3-phosphocholine + cholesterol = (5Z,8Z,11Z,14Z,17Z-eicosapentaenoyl)-cholesterol + 1-hexadecanoyl-sn-glycero-3-phosphocholine. The catalysed reaction is 1-hexadecanoyl-2-(9Z,12Z-octadecadienoyl)-sn-glycero-3-phosphocholine + cholesterol = cholesteryl (9Z,12Z)-octadecadienoate + 1-hexadecanoyl-sn-glycero-3-phosphocholine. The enzyme catalyses 1-hexadecanoyl-2-(6Z,9Z,12Z-octadecatrienoyl)-sn-glycero-3-phosphocholine + cholesterol = (6Z,9Z,12Z-octadecatrienoyl)-cholesterol + 1-hexadecanoyl-sn-glycero-3-phosphocholine. It catalyses the reaction 1-hexadecanoyl-2-(11Z,14Z,17Z-eicosatrienoyl)-sn-glycero-3-phosphocholine + cholesterol = (11Z,14Z,17Z-eicosatrienoyl)-cholesterol + 1-hexadecanoyl-sn-glycero-3-phosphocholine. It carries out the reaction 1-hexadecanoyl-2-(9Z,12Z,15Z-octadecatrienoyl)-sn-glycero-3-phosphocholine + cholesterol = (9Z,12Z,15Z-octadecatrienoyl)-cholesterol + 1-hexadecanoyl-sn-glycero-3-phosphocholine. The catalysed reaction is 1-hexadecanoyl-2-(9Z,12Z-octadecadienoyl)-sn-glycero-3-phosphocholine + H2O = (9Z,12Z)-octadecadienoate + 1-hexadecanoyl-sn-glycero-3-phosphocholine + H(+). The enzyme catalyses 1-hexadecanoyl-2-(5Z,8Z,11Z,14Z-eicosatetraenoyl)-sn-glycero-3-phosphocholine + H2O = 1-hexadecanoyl-sn-glycero-3-phosphocholine + (5Z,8Z,11Z,14Z)-eicosatetraenoate + H(+). It catalyses the reaction a 1-O-alkyl-2-acetyl-sn-glycero-3-phosphocholine + 1-hexadecanoyl-sn-glycero-3-phosphocholine = 1-hexadecanoyl-2-acetyl-sn-glycero-3-phosphocholine + a 1-O-alkyl-sn-glycero-3-phosphocholine. Functionally, central enzyme in the extracellular metabolism of plasma lipoproteins. Synthesized mainly in the liver and secreted into plasma where it converts cholesterol and phosphatidylcholines (lecithins) to cholesteryl esters and lysophosphatidylcholines on the surface of high and low density lipoproteins (HDLs and LDLs). The cholesterol ester is then transported back to the liver. Also produced in the brain by primary astrocytes, and esterifies free cholesterol on nascent APOE-containing lipoproteins secreted from glia and influences cerebral spinal fluid (CSF) APOE- and APOA1 levels. Together with APOE and the cholesterol transporter ABCA1, plays a key role in the maturation of glial-derived, nascent lipoproteins. Required for remodeling high-density lipoprotein particles into their spherical forms. Has a preference for plasma 16:0-18:2 or 18:O-18:2 phosphatidylcholines. Catalyzes the hydrolysis of 1-O-alkyl-2-acetyl-sn-glycero-3-phosphocholine (platelet-activating factor or PAF) to 1-O-alkyl-sn-glycero-3-phosphocholine (lyso-PAF). Also catalyzes the transfer of the acetate group from PAF to 1-hexadecanoyl-sn-glycero-3-phosphocholine forming lyso-PAF. Catalyzes the esterification of (24S)-hydroxycholesterol (24(S)OH-C), also known as cerebrosterol to produce 24(S)OH-C monoesters. The polypeptide is Phosphatidylcholine-sterol acyltransferase (LCAT) (Sus scrofa (Pig)).